Here is a 188-residue protein sequence, read N- to C-terminus: Antitoxin SocA (188 aa).

In terms of assembly, interacts with cognate toxin SocB and with ClpX.

Functionally, antitoxin component of an atypical type II toxin-antitoxin (TA) system. Unlike most type II TA systems, neutralizes the toxic activity of cognate toxin SocB by acting as an adapter to promote its degradation by ClpXP; degradation is dependent on the N-terminus of ClpX. The sequence is that of Antitoxin SocA from Caulobacter vibrioides (strain NA1000 / CB15N) (Caulobacter crescentus).